A 59-amino-acid chain; its full sequence is MDVPYDLTSYIRVLKLASTPSWEEFSQIAKIAGAGIALVGLLGFIIFAVMTFVPGSKPV.

Residues 33 to 53 (GAGIALVGLLGFIIFAVMTFV) traverse the membrane as a helical segment.

Belongs to the SecE/SEC61-gamma family. Component of the Sec protein translocase complex. Heterotrimer consisting of SecY (alpha), SecG (beta) and SecE (gamma) subunits. The heterotrimers can form oligomers, although 1 heterotrimer is thought to be able to translocate proteins. Interacts with the ribosome. May interact with SecDF, and other proteins may be involved.

Its subcellular location is the cell membrane. Its function is as follows. Essential subunit of the Sec protein translocation channel SecYEG. Clamps together the 2 halves of SecY. May contact the channel plug during translocation. This chain is Protein translocase subunit SecE, found in Haloarcula marismortui (strain ATCC 43049 / DSM 3752 / JCM 8966 / VKM B-1809) (Halobacterium marismortui).